We begin with the raw amino-acid sequence, 379 residues long: Alcohol dehydrogenase class-3 (379 aa).

At Ser-2 the chain carries N-acetylserine. Positions 48, 70, 100, 103, 106, 114, and 177 each coordinate Zn(2+).

This sequence belongs to the zinc-containing alcohol dehydrogenase family. Class-III subfamily. Requires Zn(2+) as cofactor.

It catalyses the reaction a primary alcohol + NAD(+) = an aldehyde + NADH + H(+). The catalysed reaction is a secondary alcohol + NAD(+) = a ketone + NADH + H(+). It carries out the reaction S-(hydroxymethyl)glutathione + NADP(+) = S-formylglutathione + NADPH + H(+). The enzyme catalyses S-(hydroxymethyl)glutathione + NAD(+) = S-formylglutathione + NADH + H(+). It catalyses the reaction octan-1-ol + NAD(+) = octanal + NADH + H(+). Functionally, class-III ADH is remarkably ineffective in oxidizing ethanol, but it readily catalyzes the oxidation of long-chain primary alcohols and the oxidation of S-(hydroxymethyl) glutathione. This Drosophila melanogaster (Fruit fly) protein is Alcohol dehydrogenase class-3 (Fdh).